A 189-amino-acid chain; its full sequence is Phosphoheptose isomerase (189 aa).

Residues 34 to 189 (LVAALKGGKK…CDLVEKGLFK (156 aa)) enclose the SIS domain. 49 to 51 (NGG) provides a ligand contact to substrate. Residues His-58 and Glu-62 each coordinate Zn(2+). Substrate contacts are provided by residues Glu-62, 91-92 (ND), 117-119 (STS), Ser-122, and Gln-169. Positions 169 and 177 each coordinate Zn(2+).

The protein belongs to the SIS family. GmhA subfamily. In terms of assembly, homotetramer. It depends on Zn(2+) as a cofactor.

Its subcellular location is the cytoplasm. The catalysed reaction is 2 D-sedoheptulose 7-phosphate = D-glycero-alpha-D-manno-heptose 7-phosphate + D-glycero-beta-D-manno-heptose 7-phosphate. It participates in carbohydrate biosynthesis; D-glycero-D-manno-heptose 7-phosphate biosynthesis; D-glycero-alpha-D-manno-heptose 7-phosphate and D-glycero-beta-D-manno-heptose 7-phosphate from sedoheptulose 7-phosphate: step 1/1. Functionally, catalyzes the isomerization of sedoheptulose 7-phosphate in D-glycero-D-manno-heptose 7-phosphate. This Geobacter metallireducens (strain ATCC 53774 / DSM 7210 / GS-15) protein is Phosphoheptose isomerase.